The sequence spans 605 residues: Elongation factor 4 (605 aa).

One can recognise a tr-type G domain in the interval 4–181; that stretch reads NKIKTFSIIA…AIVEYVPSPL (178 aa). GTP is bound by residues 16-21 and 128-131; these read DHGKST and NKVD.

This sequence belongs to the TRAFAC class translation factor GTPase superfamily. Classic translation factor GTPase family. LepA subfamily.

It localises to the cell membrane. It carries out the reaction GTP + H2O = GDP + phosphate + H(+). Its function is as follows. Required for accurate and efficient protein synthesis under certain stress conditions. May act as a fidelity factor of the translation reaction, by catalyzing a one-codon backward translocation of tRNAs on improperly translocated ribosomes. Back-translocation proceeds from a post-translocation (POST) complex to a pre-translocation (PRE) complex, thus giving elongation factor G a second chance to translocate the tRNAs correctly. Binds to ribosomes in a GTP-dependent manner. The polypeptide is Elongation factor 4 (Mycoplasmopsis synoviae (strain 53) (Mycoplasma synoviae)).